The following is a 170-amino-acid chain: Adenine phosphoribosyltransferase (170 aa).

This sequence belongs to the purine/pyrimidine phosphoribosyltransferase family. Homodimer.

The protein localises to the cytoplasm. The catalysed reaction is AMP + diphosphate = 5-phospho-alpha-D-ribose 1-diphosphate + adenine. Its pathway is purine metabolism; AMP biosynthesis via salvage pathway; AMP from adenine: step 1/1. In terms of biological role, catalyzes a salvage reaction resulting in the formation of AMP, that is energically less costly than de novo synthesis. This is Adenine phosphoribosyltransferase from Lactococcus lactis subsp. cremoris (strain SK11).